The chain runs to 87 residues: Acylphosphatase (87 aa).

Positions 2-87 (RLTALVSGHV…ETGLREFHIY (86 aa)) constitute an Acylphosphatase-like domain. Residues R17 and N35 contribute to the active site.

The protein belongs to the acylphosphatase family.

It catalyses the reaction an acyl phosphate + H2O = a carboxylate + phosphate + H(+). This is Acylphosphatase (acyP) from Deinococcus radiodurans (strain ATCC 13939 / DSM 20539 / JCM 16871 / CCUG 27074 / LMG 4051 / NBRC 15346 / NCIMB 9279 / VKM B-1422 / R1).